The chain runs to 480 residues: Cysteine--tRNA ligase (480 aa).

C27 serves as a coordination point for Zn(2+). The 'HIGH' region motif lies at 29 to 39; sequence PTVYNYAHIGN. Positions 221, 246, and 250 each coordinate Zn(2+). The 'KMSKS' region motif lies at 278–282; it reads KMSKS. K281 provides a ligand contact to ATP.

This sequence belongs to the class-I aminoacyl-tRNA synthetase family. As to quaternary structure, monomer. Zn(2+) is required as a cofactor.

The protein resides in the cytoplasm. It carries out the reaction tRNA(Cys) + L-cysteine + ATP = L-cysteinyl-tRNA(Cys) + AMP + diphosphate. This chain is Cysteine--tRNA ligase, found in Borreliella burgdorferi (strain ZS7) (Borrelia burgdorferi).